Reading from the N-terminus, the 279-residue chain is Energy-coupling factor transporter ATP-binding protein EcfA2 (279 aa).

Positions 3 to 245 (ITLKNVSYTY…LDFMESIQLG (243 aa)) constitute an ABC transporter domain. 40–47 (GHTGSGKS) is an ATP binding site.

This sequence belongs to the ABC transporter superfamily. Energy-coupling factor EcfA family. As to quaternary structure, forms a stable energy-coupling factor (ECF) transporter complex composed of 2 membrane-embedded substrate-binding proteins (S component), 2 ATP-binding proteins (A component) and 2 transmembrane proteins (T component).

The protein localises to the cell membrane. ATP-binding (A) component of a common energy-coupling factor (ECF) ABC-transporter complex. Unlike classic ABC transporters this ECF transporter provides the energy necessary to transport a number of different substrates. This chain is Energy-coupling factor transporter ATP-binding protein EcfA2, found in Streptococcus sanguinis (strain SK36).